Consider the following 305-residue polypeptide: UDP-3-O-acyl-N-acetylglucosamine deacetylase (305 aa).

Positions 78, 237, and 241 each coordinate Zn(2+). His-264 functions as the Proton donor in the catalytic mechanism.

This sequence belongs to the LpxC family. Zn(2+) serves as cofactor.

The catalysed reaction is a UDP-3-O-[(3R)-3-hydroxyacyl]-N-acetyl-alpha-D-glucosamine + H2O = a UDP-3-O-[(3R)-3-hydroxyacyl]-alpha-D-glucosamine + acetate. Its pathway is glycolipid biosynthesis; lipid IV(A) biosynthesis; lipid IV(A) from (3R)-3-hydroxytetradecanoyl-[acyl-carrier-protein] and UDP-N-acetyl-alpha-D-glucosamine: step 2/6. Functionally, catalyzes the hydrolysis of UDP-3-O-myristoyl-N-acetylglucosamine to form UDP-3-O-myristoylglucosamine and acetate, the committed step in lipid A biosynthesis. The polypeptide is UDP-3-O-acyl-N-acetylglucosamine deacetylase (Burkholderia mallei (strain NCTC 10247)).